A 784-amino-acid chain; its full sequence is MQQKMLRILEFDKVKEQLAEHASSALGLEKIAALVPSSDLDEVAVWLEETDEAAAVLRLRGYVPLDGVVDIRSHLKRAAIGGVLSPIELLEVAATAAASRQMKQLIMSLHDEHGGLARLADYADELAEVPALEEDIRRSIDDHGEVLDTASDRLRSLRGQIRAAEARIREKLESIIRSPSAQKRLSDAIITIRNDRYVIPVKQEYRSAYGGIVHDQSASGATLFIEPQVVVELNNALREARAKEKQEIERILRELSAKVAEHDEPLKRAVEALAHFDFLFAKAKYARRLQAAKPAVNNRGYLRFLQARHPLIDQDKAVPNDIVLGGDYTTIVITGPNTGGKTVTLKTVGLLTIMAQAGLFIPAADGSEAAVFRSVFADIGDEQSIEQSLSTFSSHMVNIVDILRHVDEESLVLFDELGAGTDPQEGAALAIAILDEVHGRGARTVATTHYPELKAYGYNRPGVVNASVEFDTETLRPTYKLLIGIPGRSNAFDISRRLGLDERIIERAKVQVSAESHSVENMIASLERSKKQAEEDEARAHSAREEAERLRAEWEQKLEELEDKKAEQLAEAAQKATDIIRAAEREAERIINELRRLQKEKQAEVKEHELIAAKQRLAAAVPVVEKRKKTKKATARHAFQSGDEVKVTSLNQKGYLLEKVSEDEWQVQLGILKMKIHERDLEYIGSAPAKEVTPIATVKGKDAHVSLELDLRGERYEDALVRLEKYIDDAVLAGYPRVSIIHGKGTGALRQGVQQFLKQHRAVKSFRFGAANEGGTGVTVVELK.

335–342 contacts ATP; that stretch reads GPNTGGKT. The interval 527-546 is disordered; sequence ERSKKQAEEDEARAHSAREE. The Smr domain occupies 709-784; it reads LDLRGERYED…GTGVTVVELK (76 aa).

The protein belongs to the DNA mismatch repair MutS family. MutS2 subfamily. As to quaternary structure, homodimer. Binds to stalled ribosomes, contacting rRNA.

In terms of biological role, endonuclease that is involved in the suppression of homologous recombination and thus may have a key role in the control of bacterial genetic diversity. Functionally, acts as a ribosome collision sensor, splitting the ribosome into its 2 subunits. Detects stalled/collided 70S ribosomes which it binds and splits by an ATP-hydrolysis driven conformational change. Acts upstream of the ribosome quality control system (RQC), a ribosome-associated complex that mediates the extraction of incompletely synthesized nascent chains from stalled ribosomes and their subsequent degradation. Probably generates substrates for RQC. This chain is Endonuclease MutS2, found in Geobacillus thermodenitrificans (strain NG80-2).